Here is a 112-residue protein sequence, read N- to C-terminus: Iron-sulfur cluster insertion protein ErpA (112 aa).

Iron-sulfur cluster contacts are provided by C40, C104, and C106.

It belongs to the HesB/IscA family. Homodimer. Iron-sulfur cluster serves as cofactor.

Functionally, required for insertion of 4Fe-4S clusters for at least IspG. The chain is Iron-sulfur cluster insertion protein ErpA from Pseudoalteromonas translucida (strain TAC 125).